We begin with the raw amino-acid sequence, 104 residues long: Urease subunit beta (104 aa).

The protein belongs to the urease beta subunit family. In terms of assembly, heterotrimer of UreA (gamma), UreB (beta) and UreC (alpha) subunits. Three heterotrimers associate to form the active enzyme.

Its subcellular location is the cytoplasm. The catalysed reaction is urea + 2 H2O + H(+) = hydrogencarbonate + 2 NH4(+). The protein operates within nitrogen metabolism; urea degradation; CO(2) and NH(3) from urea (urease route): step 1/1. This chain is Urease subunit beta, found in Rhodococcus opacus (strain B4).